Here is a 397-residue protein sequence, read N- to C-terminus: Protein ROH1D (397 aa).

Residues 247–267 traverse the membrane as a helical segment; that stretch reads LIVPVYTMTTVLLFVMWALVA.

It belongs to the ROH1 family. In terms of assembly, interacts with EXO70C2. Mostly expressed in mature pollen.

Its subcellular location is the membrane. It is found in the cytoplasm. The protein resides in the cytosol. Involved in the regulation of plant growth, and modulates pollen development to ensure male fertility. May also affect the composition of the inner seed coat mucilage layer. This Arabidopsis thaliana (Mouse-ear cress) protein is Protein ROH1D.